The sequence spans 245 residues: Haloacid dehalogenase-like hydrolase domain-containing protein At2g33255 (245 aa).

Thr2 is subject to N-acetylalanine. Catalysis depends on Asp39, which acts as the Nucleophile. Mg(2+) contacts are provided by Asp39, Asp41, and Asp186. Asp41 (proton donor) is an active-site residue.

It belongs to the HAD-like hydrolase superfamily. DOG/GPP family. The cofactor is Mg(2+).

The polypeptide is Haloacid dehalogenase-like hydrolase domain-containing protein At2g33255 (Arabidopsis thaliana (Mouse-ear cress)).